The sequence spans 282 residues: Cyanocobalamin reductase / alkylcobalamin dealkylase (282 aa).

Residues D104, 115-118 (ILAQ), 129-131 (YYQ), C149, and I160 contribute to the substrate site. The segment at 234–282 (LGLAQPSEKPSSPSPDLPFTTPAPKKPGNPSRARSWLSPRVSPPASPGP) is disordered. Residues S245, S247, S275, and S279 each carry the phosphoserine modification.

It belongs to the MMACHC family. Monomer in the absence of bound substrate. Homodimer; dimerization is triggered by binding to FMN or adenosylcobalamin. Interacts with LMBRD1 and ABCD4; the interaction ensures the transport of cobalamin from the lysosome to the cytoplasm. Forms a multiprotein complex with MMADHC, MTR and MTRR; the interaction with MTR could modulate MMACHC-dependent processing of cobalamin. Heterodimer with MMADHC; the interaction might play a role in the regulation of the balance between AdoCbl and MeCbl synthesis. FAD is required as a cofactor. It depends on FMN as a cofactor. As to expression, widely expressed. Expressed at higher level in fetal liver. Also expressed in spleen, lymph node, thymus and bone marrow. Weakly or not expressed in peripheral blood leukocytes.

The protein localises to the cytoplasm. Its subcellular location is the cytosol. It catalyses the reaction 2 cob(II)alamin-[cyanocobalamin reductase] + 2 hydrogen cyanide + NADP(+) = 2 cyanocob(III)alamin + 2 apo-[cyanocobalamin reductase] + NADPH + H(+). The catalysed reaction is apo-[alkylcobalamin reductase] + an R-cob(III)alamin + glutathione = cob(I)alamin-[alkylcobalamin reductase] + an S-substituted glutathione + H(+). It carries out the reaction apo-[alkylcobalamin reductase] + methylcob(III)alamin + glutathione = S-methyl glutathione + cob(I)alamin-[alkylcobalamin reductase] + H(+). The enzyme catalyses apo-[alkylcobalamin reductase] + adenosylcob(III)alamin + glutathione = S-adenosylglutathione + cob(I)alamin-[alkylcobalamin reductase] + H(+). Functionally, cobalamin (vitamin B12) cytosolic chaperone that catalyzes the reductive decyanation of cyanocob(III)alamin (cyanocobalamin, CNCbl) to yield cob(II)alamin and cyanide, using FAD or FMN as cofactors and NADPH as cosubstrate. Cyanocobalamin constitutes the inactive form of vitamin B12 introduced from the diet, and is converted into the active cofactors methylcobalamin (MeCbl) involved in methionine biosynthesis, and 5'-deoxyadenosylcobalamin (AdoCbl) involved in the TCA cycle. Forms a complex with the lysosomal transporter ABCD4 and its chaperone LMBRD1, to transport cobalamin across the lysosomal membrane into the cytosol. The processing of cobalamin in the cytosol occurs in a multiprotein complex composed of at least MMACHC, MMADHC, MTRR (methionine synthase reductase) and MTR (methionine synthase) which may contribute to shuttle safely and efficiently cobalamin towards MTR in order to produce methionine. Also acts as a glutathione transferase by catalyzing the dealkylation of the alkylcob(III)alamins MeCbl and AdoCbl, using the thiolate of glutathione for nucleophilic displacement to generate cob(I)alamin and the corresponding glutathione thioether. The conversion of incoming MeCbl or AdoCbl into a common intermediate cob(I)alamin is necessary to meet the cellular needs for both cofactors. Cysteine and homocysteine cannot substitute for glutathione in this reaction. This Homo sapiens (Human) protein is Cyanocobalamin reductase / alkylcobalamin dealkylase.